Here is a 226-residue protein sequence, read N- to C-terminus: tRNA (guanine-N(7)-)-methyltransferase (226 aa).

Residues 1–21 (MTHPQQPHGPLRSFGRLKSRP) form a disordered region. S-adenosyl-L-methionine contacts are provided by Glu-59, Glu-84, Asp-111, and Asp-133. Asp-133 is an active-site residue. Lys-137 contacts substrate. The segment at 139-144 (RHNKRR) is interaction with RNA. Residues Asp-169 and 206–209 (TRYE) each bind substrate.

This sequence belongs to the class I-like SAM-binding methyltransferase superfamily. TrmB family.

It catalyses the reaction guanosine(46) in tRNA + S-adenosyl-L-methionine = N(7)-methylguanosine(46) in tRNA + S-adenosyl-L-homocysteine. Its pathway is tRNA modification; N(7)-methylguanine-tRNA biosynthesis. In terms of biological role, catalyzes the formation of N(7)-methylguanine at position 46 (m7G46) in tRNA. This chain is tRNA (guanine-N(7)-)-methyltransferase, found in Caulobacter sp. (strain K31).